The primary structure comprises 396 residues: Ornithine aminotransferase 2 (396 aa).

An N6-(pyridoxal phosphate)lysine modification is found at lysine 255.

It belongs to the class-III pyridoxal-phosphate-dependent aminotransferase family. OAT subfamily. Requires pyridoxal 5'-phosphate as cofactor.

Its subcellular location is the cytoplasm. The catalysed reaction is a 2-oxocarboxylate + L-ornithine = L-glutamate 5-semialdehyde + an L-alpha-amino acid. It participates in amino-acid biosynthesis; L-proline biosynthesis; L-glutamate 5-semialdehyde from L-ornithine: step 1/1. In terms of biological role, catalyzes the interconversion of ornithine to glutamate semialdehyde. The protein is Ornithine aminotransferase 2 of Staphylococcus aureus (strain COL).